The sequence spans 253 residues: Hydroxyacylglutathione hydrolase (253 aa).

Residues His-54, His-56, Asp-58, His-59, His-112, Asp-131, and His-169 each contribute to the Zn(2+) site.

Belongs to the metallo-beta-lactamase superfamily. Glyoxalase II family. Monomer. It depends on Zn(2+) as a cofactor.

It carries out the reaction an S-(2-hydroxyacyl)glutathione + H2O = a 2-hydroxy carboxylate + glutathione + H(+). The protein operates within secondary metabolite metabolism; methylglyoxal degradation; (R)-lactate from methylglyoxal: step 2/2. Functionally, thiolesterase that catalyzes the hydrolysis of S-D-lactoyl-glutathione to form glutathione and D-lactic acid. The chain is Hydroxyacylglutathione hydrolase from Bartonella quintana (strain Toulouse) (Rochalimaea quintana).